A 319-amino-acid chain; its full sequence is Homoserine dehydrogenase (319 aa).

NADPH is bound by residues Phe10, Thr12, Val13, Arg40, Lys57, Ser92, Ser93, Ser114, and Lys116. An NAD(+)-binding site is contributed by Val13. The NADP(+) site is built by Val13 and Arg40. An NAD(+)-binding site is contributed by Ser92. Residue Ser92 coordinates NADP(+). 2 residues coordinate NADP(+): Ser114 and Lys116. Glu140, Val143, Ala145, and Thr147 together coordinate Na(+). NADP(+)-binding residues include Gly197 and Glu200. Glu200 and Asp211 together coordinate L-homoserine. Catalysis depends on Lys215, which acts as the Proton donor. Gly296 is an NADPH binding site. Gly296 is a binding site for NAD(+). Gly296 contacts NADP(+).

It belongs to the homoserine dehydrogenase family. Homodimer. A metal cation serves as cofactor.

It catalyses the reaction L-homoserine + NAD(+) = L-aspartate 4-semialdehyde + NADH + H(+). It functions in the pathway amino-acid biosynthesis; L-methionine biosynthesis via de novo pathway; L-homoserine from L-aspartate: step 3/3. Its pathway is amino-acid biosynthesis; L-threonine biosynthesis; L-threonine from L-aspartate: step 3/5. Catalyzes the conversion of L-aspartate-beta-semialdehyde (L-Asa) to L-homoserine (L-Hse), the third step in the biosynthesis of threonine and methionine from aspartate. Utilizes NADH but not NADPH as coenzyme. This chain is Homoserine dehydrogenase, found in Pyrococcus horikoshii (strain ATCC 700860 / DSM 12428 / JCM 9974 / NBRC 100139 / OT-3).